Here is a 247-residue protein sequence, read N- to C-terminus: Epidermal cell differentiation inhibitor (247 aa).

The first 35 residues, 1–35 (MKNKLLFKIFLSLSLALSVYSINDKIIEVSNTSLA), serve as a signal peptide directing secretion. The 209-residue stretch at 39-247 (KNFTDLDEAT…IIITAIVFKK (209 aa)) folds into the TR mART core domain. Residues arginine 120, serine 173, and glutamate 215 contribute to the active site.

To ADP-ribosyltransferase C3 of Clostridium.

In terms of biological role, inhibits terminal differentiation of cultured mouse keratinocytes. In culture, also inhibits the differentiation of human keratinocytes. Probable ADP-ribosyltransferase. The chain is Epidermal cell differentiation inhibitor from Staphylococcus aureus.